The following is a 72-amino-acid chain: uncharacterized protein (72 aa).

The protein belongs to the phage portal family. HK97 subfamily.

This is an uncharacterized protein from Rickettsia conorii (strain ATCC VR-613 / Malish 7).